We begin with the raw amino-acid sequence, 274 residues long: Cytochrome b-c1 complex subunit Rieske, mitochondrial (274 aa).

The Mitochondrial matrix segment spans residues 79–103; sequence SHTDVKVPDFSEYRRLEVLDSTKSS. The chain crosses the membrane as a helical span at residues 104–140; the sequence is RESSEARKGFSYLVTGVTTVGVAYAAKNAVTQFVSSM. At 141 to 274 the chain is on the mitochondrial intermembrane side; the sequence is SASADVLALA…FTSDDMVIVG (134 aa). Positions 187–272 constitute a Rieske domain; it reads EAAVELSQLR…YEFTSDDMVI (86 aa). Cys-217, His-219, Cys-236, His-239, and Ser-241 together coordinate [2Fe-2S] cluster. A disulfide bridge links Cys-222 with Cys-238.

This sequence belongs to the Rieske iron-sulfur protein family. In terms of assembly, component of the ubiquinol-cytochrome c oxidoreductase (cytochrome b-c1 complex, complex III, CIII), a multisubunit enzyme composed of 11 subunits. The complex is composed of 3 respiratory subunits cytochrome b, cytochrome c1 and Rieske protein UQCRFS1, 2 core protein subunits UQCRC1/QCR1 and UQCRC2/QCR2, and 6 low-molecular weight protein subunits UQCRH/QCR6, UQCRB/QCR7, UQCRQ/QCR8, UQCR10/QCR9, UQCR11/QCR10 and subunit 9, the cleavage product of Rieske protein UQCRFS1. The complex exists as an obligatory dimer and forms supercomplexes (SCs) in the inner mitochondrial membrane with NADH-ubiquinone oxidoreductase (complex I, CI) and cytochrome c oxidase (complex IV, CIV), resulting in different assemblies (supercomplex SCI(1)III(2)IV(1) and megacomplex MCI(2)III(2)IV(2)). Incorporation of the Rieske protein UQCRFS1 is the penultimate step in complex III assembly. Interacts with TTC19, which is involved in the clearance of UQCRFS1 fragments. Component of the ubiquinol-cytochrome c oxidoreductase (cytochrome b-c1 complex, complex III, CIII). Subunit 9 corresponds to the mitochondrial targeting sequence (MTS) of Rieske protein UQCRFS1. It is retained after processing and incorporated inside complex III, where it remains bound to the complex and localizes between the 2 core subunits UQCRC1/QCR1 and UQCRC2/QCR2. It depends on [2Fe-2S] cluster as a cofactor. Post-translationally, proteolytic processing is necessary for the correct insertion of UQCRFS1 in the complex III dimer. Several fragments are generated during UQCRFS1 insertion, most probably due to the endogenous matrix-processing peptidase (MPP) activity of the 2 core protein subunits UQCRC1/QCR1 and UQCRC2/QCR2, which are homologous to the 2 mitochondrial-processing peptidase (MPP) subunits beta-MPP and alpha-MPP respectively. The action of the protease is also necessary for the clearance of the UQCRFS1 fragments.

Its subcellular location is the mitochondrion inner membrane. It catalyses the reaction a quinol + 2 Fe(III)-[cytochrome c](out) = a quinone + 2 Fe(II)-[cytochrome c](out) + 2 H(+)(out). Functionally, component of the ubiquinol-cytochrome c oxidoreductase, a multisubunit transmembrane complex that is part of the mitochondrial electron transport chain which drives oxidative phosphorylation. The respiratory chain contains 3 multisubunit complexes succinate dehydrogenase (complex II, CII), ubiquinol-cytochrome c oxidoreductase (cytochrome b-c1 complex, complex III, CIII) and cytochrome c oxidase (complex IV, CIV), that cooperate to transfer electrons derived from NADH and succinate to molecular oxygen, creating an electrochemical gradient over the inner membrane that drives transmembrane transport and the ATP synthase. The cytochrome b-c1 complex catalyzes electron transfer from ubiquinol to cytochrome c, linking this redox reaction to translocation of protons across the mitochondrial inner membrane, with protons being carried across the membrane as hydrogens on the quinol. In the process called Q cycle, 2 protons are consumed from the matrix, 4 protons are released into the intermembrane space and 2 electrons are passed to cytochrome c. The Rieske protein is a catalytic core subunit containing a [2Fe-2S] iron-sulfur cluster. It cycles between 2 conformational states during catalysis to transfer electrons from the quinol bound in the Q(0) site in cytochrome b to cytochrome c1. Incorporation of UQCRFS1 is the penultimate step in complex III assembly. Its function is as follows. Component of the ubiquinol-cytochrome c oxidoreductase (cytochrome b-c1 complex, complex III, CIII). UQCRFS1 undergoes proteolytic processing once it is incorporated in the complex III dimer. One of the fragments, called subunit 9, corresponds to its mitochondrial targeting sequence (MTS). The proteolytic processing is necessary for the correct insertion of UQCRFS1 in the complex III dimer, but the persistence of UQCRFS1-derived fragments may prevent newly imported UQCRFS1 to be processed and assembled into complex III and is detrimental for the complex III structure and function. The protein is Cytochrome b-c1 complex subunit Rieske, mitochondrial (UQCRFS1) of Pan paniscus (Pygmy chimpanzee).